The chain runs to 442 residues: Cyclic 2,3-diphosphoglycerate synthetase (442 aa).

The protein belongs to the cyclic 2,3-diphosphoglycerate synthetase family.

Its subcellular location is the cytoplasm. It catalyses the reaction (2R)-2,3-bisphosphoglycerate + ATP + H(+) = cyclic (2R)-2,3-bisphosphoglycerate + ADP + phosphate. Its function is as follows. Catalyzes the formation of cyclic 2,3-diphosphoglycerate (cDPG) by formation of an intramolecular phosphoanhydride bond at the expense of ATP. The sequence is that of Cyclic 2,3-diphosphoglycerate synthetase from Rubrobacter xylanophilus (strain DSM 9941 / JCM 11954 / NBRC 16129 / PRD-1).